A 343-amino-acid polypeptide reads, in one-letter code: tRNA N6-adenosine threonylcarbamoyltransferase (343 aa).

2 residues coordinate Fe cation: H111 and H115. Residues 133–137, D166, G179, D183, and N273 contribute to the substrate site; that span reads AVSGG. Residue D301 coordinates Fe cation.

It belongs to the KAE1 / TsaD family. The cofactor is Fe(2+).

It localises to the cytoplasm. The catalysed reaction is L-threonylcarbamoyladenylate + adenosine(37) in tRNA = N(6)-L-threonylcarbamoyladenosine(37) in tRNA + AMP + H(+). Required for the formation of a threonylcarbamoyl group on adenosine at position 37 (t(6)A37) in tRNAs that read codons beginning with adenine. Is involved in the transfer of the threonylcarbamoyl moiety of threonylcarbamoyl-AMP (TC-AMP) to the N6 group of A37, together with TsaE and TsaB. TsaD likely plays a direct catalytic role in this reaction. This is tRNA N6-adenosine threonylcarbamoyltransferase from Geotalea uraniireducens (strain Rf4) (Geobacter uraniireducens).